A 370-amino-acid chain; its full sequence is Actin-related protein 2/3 complex subunit 1A (370 aa).

WD repeat units lie at residues 6 to 45 (FLLE…WVKA), 50 to 89 (EHNG…WKPT), 140 to 179 (PIRS…VDEK), 202 to 241 (GTGG…QVST), 244 to 284 (TEFL…TFVS), and 322 to 365 (LHQN…SSIQ).

Belongs to the WD repeat ARPC1 family. Probable component of the Arp2/3 complex in which it may replace ARPC1B.

It localises to the cytoplasm. The protein localises to the cytoskeleton. The protein resides in the nucleus. In terms of biological role, probably functions as a component of the Arp2/3 complex which is involved in regulation of actin polymerization and together with an activating nucleation-promoting factor (NPF) mediates the formation of branched actin networks. In addition to its role in the cytoplasmic cytoskeleton, the Arp2/3 complex also promotes actin polymerization in the nucleus, thereby regulating gene transcription and repair of damaged DNA. The sequence is that of Actin-related protein 2/3 complex subunit 1A (ARPC1A) from Bos taurus (Bovine).